The sequence spans 111 residues: Universal stress protein B (111 aa).

2 helical membrane passes run 1–21 and 90–110; these read MIST…NMAR and FILT…LMIW.

It belongs to the universal stress protein B family.

It localises to the cell inner membrane. This Cronobacter sakazakii (strain ATCC BAA-894) (Enterobacter sakazakii) protein is Universal stress protein B.